Here is a 317-residue protein sequence, read N- to C-terminus: L-lactate dehydrogenase (317 aa).

Residues Val-17, Asp-38, Lys-43, Tyr-68, and Gly-82 to Val-83 contribute to the NAD(+) site. Arg-91 is a substrate binding site. Residues Ser-104, Val-121–Asn-123, and Ser-146 contribute to the NAD(+) site. Substrate is bound at residue Asn-123–Asp-126. Asp-151–Arg-154 contributes to the substrate binding site. Beta-D-fructose 1,6-bisphosphate is bound by residues Lys-156 and His-171. His-178 acts as the Proton acceptor in catalysis. Tyr-224 is subject to Phosphotyrosine. Position 233 (Thr-233) interacts with substrate.

This sequence belongs to the LDH/MDH superfamily. LDH family. As to quaternary structure, homotetramer.

It is found in the cytoplasm. It catalyses the reaction (S)-lactate + NAD(+) = pyruvate + NADH + H(+). The protein operates within fermentation; pyruvate fermentation to lactate; (S)-lactate from pyruvate: step 1/1. With respect to regulation, allosterically activated by fructose 1,6-bisphosphate (FBP). In terms of biological role, catalyzes the conversion of lactate to pyruvate. The protein is L-lactate dehydrogenase of Clostridium perfringens (strain SM101 / Type A).